Reading from the N-terminus, the 360-residue chain is Phospho-N-acetylmuramoyl-pentapeptide-transferase (360 aa).

10 helical membrane-spanning segments follow: residues 27 to 47, 71 to 91, 98 to 118, 142 to 162, 168 to 188, 199 to 219, 236 to 256, 263 to 283, 288 to 308, and 338 to 358; these read VMAV…LIRF, TPTM…LLWA, VWIV…DDYL, LVLA…TFVM, YMPY…VGSS, GLAI…AYLT, ASEL…FLWF, VFMG…IAVL, ILLV…ILQV, and VIVR…VTLK.

It belongs to the glycosyltransferase 4 family. MraY subfamily. It depends on Mg(2+) as a cofactor.

It is found in the cell inner membrane. It carries out the reaction UDP-N-acetyl-alpha-D-muramoyl-L-alanyl-gamma-D-glutamyl-meso-2,6-diaminopimeloyl-D-alanyl-D-alanine + di-trans,octa-cis-undecaprenyl phosphate = di-trans,octa-cis-undecaprenyl diphospho-N-acetyl-alpha-D-muramoyl-L-alanyl-D-glutamyl-meso-2,6-diaminopimeloyl-D-alanyl-D-alanine + UMP. It functions in the pathway cell wall biogenesis; peptidoglycan biosynthesis. Its function is as follows. Catalyzes the initial step of the lipid cycle reactions in the biosynthesis of the cell wall peptidoglycan: transfers peptidoglycan precursor phospho-MurNAc-pentapeptide from UDP-MurNAc-pentapeptide onto the lipid carrier undecaprenyl phosphate, yielding undecaprenyl-pyrophosphoryl-MurNAc-pentapeptide, known as lipid I. This chain is Phospho-N-acetylmuramoyl-pentapeptide-transferase, found in Psychromonas ingrahamii (strain DSM 17664 / CCUG 51855 / 37).